The chain runs to 426 residues: Histidine--tRNA ligase (426 aa).

It belongs to the class-II aminoacyl-tRNA synthetase family. In terms of assembly, homodimer.

It localises to the cytoplasm. The enzyme catalyses tRNA(His) + L-histidine + ATP = L-histidyl-tRNA(His) + AMP + diphosphate + H(+). The chain is Histidine--tRNA ligase from Streptococcus agalactiae serotype Ia (strain ATCC 27591 / A909 / CDC SS700).